The following is a 203-amino-acid chain: Large ribosomal subunit protein bL25 (203 aa).

This sequence belongs to the bacterial ribosomal protein bL25 family. CTC subfamily. Part of the 50S ribosomal subunit; part of the 5S rRNA/L5/L18/L25 subcomplex. Contacts the 5S rRNA. Binds to the 5S rRNA independently of L5 and L18.

Its function is as follows. This is one of the proteins that binds to the 5S RNA in the ribosome where it forms part of the central protuberance. This Paraburkholderia phymatum (strain DSM 17167 / CIP 108236 / LMG 21445 / STM815) (Burkholderia phymatum) protein is Large ribosomal subunit protein bL25.